A 556-amino-acid polypeptide reads, in one-letter code: Polyphenol oxidase 2 (556 aa).

His-57, His-81, His-90, His-250, His-254, and His-282 together coordinate Cu cation. Residues 79-81 (CTH) constitute a cross-link (2'-(S-cysteinyl)-histidine (Cys-His)). His-254 serves as a coordination point for substrate. Residues 379 to 556 (SKPSSGARNT…FDDVAVHVIN (178 aa)) constitute a propeptide, removed in mature form.

The protein belongs to the tyrosinase family. Heterotetramer. The cofactor is Cu(2+). In terms of processing, the C-ter is probably cleaved after Gly-378 since the mature active protein is smaller than the protein encoded by the gene.

It catalyses the reaction 2 L-dopa + O2 = 2 L-dopaquinone + 2 H2O. The catalysed reaction is L-tyrosine + O2 = L-dopaquinone + H2O. Functionally, copper-containing oxidase that catalyzes both the o-hydroxylation of monophenols and the subsequent oxidation of the resulting o-diphenols into reactive o-quinones, which evolve spontaneously to produce intermediates, which associate in dark brown pigments. Involved in the initial step of melanin synthesis. Melanins constitute a mechanism of defense and resistance to stress such as UV radiations, free radicals, gamma rays, dehydratation and extreme temperatures, and contribute to the fungal cell-wall resistance against hydrolytic enzymes in avoiding cellular lysis. Fungal pigments are also involved in the formation and stability of spores. This is Polyphenol oxidase 2 (PPO2) from Agaricus bisporus (White button mushroom).